Consider the following 424-residue polypeptide: Enolase (424 aa).

Position 165 (Gln-165) interacts with (2R)-2-phosphoglycerate. Catalysis depends on Glu-207, which acts as the Proton donor. Mg(2+) contacts are provided by Asp-244, Glu-283, and Asp-310. Residues Lys-335, Arg-364, Ser-365, and Lys-386 each coordinate (2R)-2-phosphoglycerate. Lys-335 serves as the catalytic Proton acceptor.

Belongs to the enolase family. It depends on Mg(2+) as a cofactor.

It localises to the cytoplasm. Its subcellular location is the secreted. The protein resides in the cell surface. The enzyme catalyses (2R)-2-phosphoglycerate = phosphoenolpyruvate + H2O. The protein operates within carbohydrate degradation; glycolysis; pyruvate from D-glyceraldehyde 3-phosphate: step 4/5. Catalyzes the reversible conversion of 2-phosphoglycerate (2-PG) into phosphoenolpyruvate (PEP). It is essential for the degradation of carbohydrates via glycolysis. The sequence is that of Enolase from Chlamydia trachomatis serovar D (strain ATCC VR-885 / DSM 19411 / UW-3/Cx).